We begin with the raw amino-acid sequence, 180 residues long: Large ribosomal subunit protein uL5 (180 aa).

The protein belongs to the universal ribosomal protein uL5 family. In terms of assembly, part of the 50S ribosomal subunit; part of the 5S rRNA/L5/L18/L25 subcomplex. Contacts the 5S rRNA and the P site tRNA. Forms a bridge to the 30S subunit in the 70S ribosome.

In terms of biological role, this is one of the proteins that bind and probably mediate the attachment of the 5S RNA into the large ribosomal subunit, where it forms part of the central protuberance. In the 70S ribosome it contacts protein S13 of the 30S subunit (bridge B1b), connecting the 2 subunits; this bridge is implicated in subunit movement. Contacts the P site tRNA; the 5S rRNA and some of its associated proteins might help stabilize positioning of ribosome-bound tRNAs. In Stenotrophomonas maltophilia (strain K279a), this protein is Large ribosomal subunit protein uL5.